Reading from the N-terminus, the 144-residue chain is Large ribosomal subunit protein uL15 (144 aa).

The disordered stretch occupies residues Met1–Gly49. Residues Arg21–Ala31 are compositionally biased toward gly residues.

Belongs to the universal ribosomal protein uL15 family. As to quaternary structure, part of the 50S ribosomal subunit.

Its function is as follows. Binds to the 23S rRNA. This is Large ribosomal subunit protein uL15 from Shewanella denitrificans (strain OS217 / ATCC BAA-1090 / DSM 15013).